Reading from the N-terminus, the 491-residue chain is Ketol-acid reductoisomerase (NADP(+)) (491 aa).

The KARI N-terminal Rossmann domain maps to 15–208; it reads AQLGKCRFMG…GGHRAGVLES (194 aa). Residues 45-48, R68, R76, S78, and 108-110 each bind NADP(+); these read CGAQ and DKQ. H132 is a catalytic residue. NADP(+) is bound at residue G158. KARI C-terminal knotted domains are found at residues 209–344 and 345–484; these read SFVA…TAPQ and YEGK…MTDM. The Mg(2+) site is built by D217, E221, E389, and E393. A substrate-binding site is contributed by S414.

The protein belongs to the ketol-acid reductoisomerase family. The cofactor is Mg(2+).

It catalyses the reaction (2R)-2,3-dihydroxy-3-methylbutanoate + NADP(+) = (2S)-2-acetolactate + NADPH + H(+). It carries out the reaction (2R,3R)-2,3-dihydroxy-3-methylpentanoate + NADP(+) = (S)-2-ethyl-2-hydroxy-3-oxobutanoate + NADPH + H(+). The protein operates within amino-acid biosynthesis; L-isoleucine biosynthesis; L-isoleucine from 2-oxobutanoate: step 2/4. It participates in amino-acid biosynthesis; L-valine biosynthesis; L-valine from pyruvate: step 2/4. Functionally, involved in the biosynthesis of branched-chain amino acids (BCAA). Catalyzes an alkyl-migration followed by a ketol-acid reduction of (S)-2-acetolactate (S2AL) to yield (R)-2,3-dihydroxy-isovalerate. In the isomerase reaction, S2AL is rearranged via a Mg-dependent methyl migration to produce 3-hydroxy-3-methyl-2-ketobutyrate (HMKB). In the reductase reaction, this 2-ketoacid undergoes a metal-dependent reduction by NADPH to yield (R)-2,3-dihydroxy-isovalerate. The polypeptide is Ketol-acid reductoisomerase (NADP(+)) (Escherichia coli O7:K1 (strain IAI39 / ExPEC)).